The primary structure comprises 900 residues: Isoleucine--tRNA ligase (900 aa).

The 'HIGH' region signature appears at 58–68; it reads PYANGDLHTGH. Glutamate 550 provides a ligand contact to L-isoleucyl-5'-AMP. The short motif at 591–595 is the 'KMSKS' region element; sequence KMSKS. Lysine 594 is a binding site for ATP. Cysteine 871, cysteine 874, cysteine 888, and cysteine 891 together coordinate Zn(2+).

Belongs to the class-I aminoacyl-tRNA synthetase family. IleS type 1 subfamily. As to quaternary structure, monomer. Zn(2+) serves as cofactor.

It is found in the cytoplasm. The catalysed reaction is tRNA(Ile) + L-isoleucine + ATP = L-isoleucyl-tRNA(Ile) + AMP + diphosphate. Its function is as follows. Catalyzes the attachment of isoleucine to tRNA(Ile). As IleRS can inadvertently accommodate and process structurally similar amino acids such as valine, to avoid such errors it has two additional distinct tRNA(Ile)-dependent editing activities. One activity is designated as 'pretransfer' editing and involves the hydrolysis of activated Val-AMP. The other activity is designated 'posttransfer' editing and involves deacylation of mischarged Val-tRNA(Ile). This chain is Isoleucine--tRNA ligase, found in Malacoplasma penetrans (strain HF-2) (Mycoplasma penetrans).